The primary structure comprises 165 residues: uncharacterized protein (165 aa).

A disordered region spans residues 53–123 (CSEKTGSAPN…PAPSSGRQGG (71 aa)). Low complexity predominate over residues 58–71 (GSAPNPGSSAPAPA).

This is an uncharacterized protein from Treponema pallidum (strain Nichols).